The following is a 298-amino-acid chain: uncharacterized protein (298 aa).

Residues 1–61 (MDIFISKKMR…TRKDNNISLN (61 aa)) form the HTH lysR-type domain. Positions 21-40 (IARAAEKIHMTASPFGKSIA) form a DNA-binding region, H-T-H motif.

This sequence belongs to the LysR transcriptional regulatory family.

This is an uncharacterized protein from Escherichia coli (strain K12).